The primary structure comprises 155 residues: Ribosomal RNA large subunit methyltransferase H (155 aa).

S-adenosyl-L-methionine-binding positions include leucine 72, glycine 103, and 122 to 127 (LSALTL).

It belongs to the RNA methyltransferase RlmH family. As to quaternary structure, homodimer.

It localises to the cytoplasm. It carries out the reaction pseudouridine(1915) in 23S rRNA + S-adenosyl-L-methionine = N(3)-methylpseudouridine(1915) in 23S rRNA + S-adenosyl-L-homocysteine + H(+). In terms of biological role, specifically methylates the pseudouridine at position 1915 (m3Psi1915) in 23S rRNA. This chain is Ribosomal RNA large subunit methyltransferase H, found in Salmonella choleraesuis (strain SC-B67).